The sequence spans 226 residues: UPF0758 protein SPD_0975 (226 aa).

The 123-residue stretch at 103 to 225 (SILSSQKLAK…YFSYREKTDL (123 aa)) folds into the MPN domain. Zn(2+) contacts are provided by His-174, His-176, and Asp-187. Positions 174-187 (HNHPSGAVAPSQND) match the JAMM motif motif.

The protein belongs to the UPF0758 family.

This Streptococcus pneumoniae serotype 2 (strain D39 / NCTC 7466) protein is UPF0758 protein SPD_0975.